The following is a 261-amino-acid chain: Hydroxylase cctR (261 aa).

Residues 38–58 (VFVSLLILSNTISFGLLGWIG) traverse the membrane as a helical segment. N-linked (GlcNAc...) asparagine glycosylation is present at Asn-95. 2 consecutive short sequence motifs (HXXHC) follow at residues 146–150 (HEIHC) and 176–180 (HIAHC).

It belongs to the ustYa family.

The protein localises to the membrane. The protein operates within mycotoxin biosynthesis. Its function is as follows. Hydroxylase; part of the gene cluster that mediates the biosynthesis of the mycotoxin cyclochlorotine, a hepatotoxic and carcinogenic cyclic chlorinated pentapeptide. Within the pathway, cctR performs the last step by hydroxylating cyclochlorotine to yield hydroxycyclochlorotine. The NRPS cctN initially catalyzes the condensation of L-serine (Ser), Pro, L-2-aminobutyrate (2Abu), Ser, and beta-Phe in this order to produce isocyclotine. After the dichlorination of Pro2 catalyzed by cctP2 to produce isocyclochlorotine, the cctO-mediated transacylation of isocyclochlorotine can furnish cyclochlorotine. The subsequent hydroxylation of cyclochlorotine by cctR yields hydroxycyclochlorotine as the final product. CctP1 probably acts as a phenylalanine aminomutase and provides the uncommon building block beta-Phe. Furthermore, 2Abu can be synthesized from threonine by one of the threonine dehydratases and transaminases localized outside of the cluster. The functions of the remaining proteins encoded by the cluster, cctM and cctT, have not been identified yet. This is Hydroxylase cctR from Talaromyces islandicus (Penicillium islandicum).